The following is a 167-amino-acid chain: Transcription antitermination protein NusB (167 aa).

The interval 1 to 32 (MSDTPETGKPAAGTKPAARTEAKAPPKSARRR) is disordered.

It belongs to the NusB family.

In terms of biological role, involved in transcription antitermination. Required for transcription of ribosomal RNA (rRNA) genes. Binds specifically to the boxA antiterminator sequence of the ribosomal RNA (rrn) operons. The protein is Transcription antitermination protein NusB of Cupriavidus pinatubonensis (strain JMP 134 / LMG 1197) (Cupriavidus necator (strain JMP 134)).